The sequence spans 157 residues: Small ribosomal subunit protein uS7cz/uS7cy (157 aa).

It belongs to the universal ribosomal protein uS7 family. In terms of assembly, part of the 30S ribosomal subunit.

It localises to the plastid. The protein resides in the chloroplast. One of the primary rRNA binding proteins, it binds directly to 16S rRNA where it nucleates assembly of the head domain of the 30S subunit. This Welwitschia mirabilis (Tree tumbo) protein is Small ribosomal subunit protein uS7cz/uS7cy (rps7-A).